A 472-amino-acid polypeptide reads, in one-letter code: Argininosuccinate lyase (472 aa).

Belongs to the lyase 1 family. Argininosuccinate lyase subfamily.

It localises to the cytoplasm. The catalysed reaction is 2-(N(omega)-L-arginino)succinate = fumarate + L-arginine. It participates in amino-acid biosynthesis; L-arginine biosynthesis; L-arginine from L-ornithine and carbamoyl phosphate: step 3/3. The protein is Argininosuccinate lyase of Mycobacterium avium (strain 104).